The primary structure comprises 167 residues: NADH-quinone oxidoreductase subunit I (167 aa).

4Fe-4S ferredoxin-type domains are found at residues 59 to 88 (RKYKNGEERCIACKLCEAICPAQAITIEAQ) and 98 to 127 (VRYDIDMTKCIYCGFCQEACPVDAIVEGPN). Cys-68, Cys-71, Cys-74, Cys-78, Cys-107, Cys-110, Cys-113, and Cys-117 together coordinate [4Fe-4S] cluster.

The protein belongs to the complex I 23 kDa subunit family. NDH-1 is composed of 14 different subunits. Subunits NuoA, H, J, K, L, M, N constitute the membrane sector of the complex. Requires [4Fe-4S] cluster as cofactor.

It is found in the cell inner membrane. The enzyme catalyses a quinone + NADH + 5 H(+)(in) = a quinol + NAD(+) + 4 H(+)(out). NDH-1 shuttles electrons from NADH, via FMN and iron-sulfur (Fe-S) centers, to quinones in the respiratory chain. The immediate electron acceptor for the enzyme in this species is believed to be ubiquinone. Couples the redox reaction to proton translocation (for every two electrons transferred, four hydrogen ions are translocated across the cytoplasmic membrane), and thus conserves the redox energy in a proton gradient. The chain is NADH-quinone oxidoreductase subunit I from Ehrlichia canis (strain Jake).